Reading from the N-terminus, the 1611-residue chain is SH3 domain-containing protein C23A1.17 (1611 aa).

Residues 3–67 enclose the SH3 domain; sequence SFPTRVVALY…PKDFTEPAED (65 aa). Disordered stretches follow at residues 275–648, 662–741, 762–851, and 886–1365; these read THPA…PTSL, IDPP…PPGL, AVPR…NSLN, and TPST…FSAK. Positions 278-296 are enriched in polar residues; that stretch reads AASSTMATESSHQSPSADS. Residues 300–312 show a composition bias toward basic and acidic residues; the sequence is ELSKSQRVAKDDD. The span at 316-330 shows a compositional bias: polar residues; the sequence is VSNTANSDEPASSSK. Acidic residues-rich tracts occupy residues 361 to 373 and 387 to 420; these read SEQE…DAES and SEPE…QIDP. Basic and acidic residues predominate over residues 421–433; it reads EEAKRIALRERMA. Over residues 472 to 494 the composition is skewed to low complexity; sequence STTNDSSPPKDSSSTSTQPTEQS. Residues 576-586 show a composition bias toward polar residues; sequence TQETSEQQVHK. The segment covering 605-619 has biased composition (basic and acidic residues); it reads FDKETLASNEAHEAV. Residues 637–648 are compositionally biased toward low complexity; the sequence is SSSVVTPSPTSL. Composition is skewed to polar residues over residues 799–808, 886–902, and 923–940; these read SRPSTGSQLR, TPST…SNVA, and ATHQ…QLGS. Pro residues-rich tracts occupy residues 963–974, 1022–1053, and 1076–1241; these read PAAPPSIPPPLP, PPVP…PPVP, and IPAP…PVPA. Over residues 1242–1278 the composition is skewed to low complexity; that stretch reads PSSEAPSVSTPRSSVPSPHSNASPSPTSSSMASAAPA. Phosphoserine occurs at positions 1258, 1261, and 1266. The segment covering 1300–1312 has biased composition (basic residues); it reads KSSKSGEHHHHHN. Over residues 1317-1327 the composition is skewed to polar residues; it reads DSSSTRTSLAH. Over residues 1340–1350 the composition is skewed to low complexity; that stretch reads RSSSRASKKPS. Residues 1351–1362 show a composition bias toward polar residues; the sequence is IVSTTGPFNESF. Ser-1379 is subject to Phosphoserine. Phosphothreonine is present on Thr-1380.

The protein resides in the cytoplasm. In Schizosaccharomyces pombe (strain 972 / ATCC 24843) (Fission yeast), this protein is SH3 domain-containing protein C23A1.17.